Here is a 710-residue protein sequence, read N- to C-terminus: Putative transmembrane protein ORF710 (710 aa).

The signal sequence occupies residues 1–33 (MKLDRKKKRLLLKTIFSIVILILPLTFLHPTNS). 3 helical membrane passes run 41–61 (VPIQIIYNYNVSGGVIYTAPL), 76–95 (YGTLLYSYLFSTNPAFVVWY), and 689–709 (VAIVSMAYGTKIWIGVFIFAI).

It localises to the host membrane. The protein is Putative transmembrane protein ORF710 of Acidianus convivator (ATV).